Reading from the N-terminus, the 967-residue chain is Importin-alpha re-exporter (967 aa).

One can recognise an Importin N-terminal domain in the interval 20-95 (AEEALKVWEL…KREIINLMLK (76 aa)).

This sequence belongs to the XPO2/CSE1 family. As to quaternary structure, binds with high affinity to importin-alpha only in the presence of RanGTP.

It localises to the cytoplasm. It is found in the nucleus envelope. Its function is as follows. Export receptor for importin alpha. Mediates importin-alpha re-export from the nucleus to the cytoplasm after import substrates have been released into the nucleoplasm. This Schizosaccharomyces pombe (strain 972 / ATCC 24843) (Fission yeast) protein is Importin-alpha re-exporter (kap109).